The primary structure comprises 439 residues: Methylenetetrahydrofolate--tRNA-(uracil-5-)-methyltransferase TrmFO (439 aa).

9 to 14 provides a ligand contact to FAD; the sequence is GAGLAG.

It belongs to the MnmG family. TrmFO subfamily. It depends on FAD as a cofactor.

The protein resides in the cytoplasm. The catalysed reaction is uridine(54) in tRNA + (6R)-5,10-methylene-5,6,7,8-tetrahydrofolate + NADH + H(+) = 5-methyluridine(54) in tRNA + (6S)-5,6,7,8-tetrahydrofolate + NAD(+). It catalyses the reaction uridine(54) in tRNA + (6R)-5,10-methylene-5,6,7,8-tetrahydrofolate + NADPH + H(+) = 5-methyluridine(54) in tRNA + (6S)-5,6,7,8-tetrahydrofolate + NADP(+). In terms of biological role, catalyzes the folate-dependent formation of 5-methyl-uridine at position 54 (M-5-U54) in all tRNAs. This Lactobacillus delbrueckii subsp. bulgaricus (strain ATCC BAA-365 / Lb-18) protein is Methylenetetrahydrofolate--tRNA-(uracil-5-)-methyltransferase TrmFO.